Reading from the N-terminus, the 354-residue chain is Methylthioribose-1-phosphate isomerase (354 aa).

Residues 58–60 (RGA), R101, and Q204 contribute to the substrate site. D245 serves as the catalytic Proton donor. Position 255 to 256 (255 to 256 (NK)) interacts with substrate.

The protein belongs to the eIF-2B alpha/beta/delta subunits family. MtnA subfamily.

The enzyme catalyses 5-(methylsulfanyl)-alpha-D-ribose 1-phosphate = 5-(methylsulfanyl)-D-ribulose 1-phosphate. Its pathway is amino-acid biosynthesis; L-methionine biosynthesis via salvage pathway; L-methionine from S-methyl-5-thio-alpha-D-ribose 1-phosphate: step 1/6. Its function is as follows. Catalyzes the interconversion of methylthioribose-1-phosphate (MTR-1-P) into methylthioribulose-1-phosphate (MTRu-1-P). This is Methylthioribose-1-phosphate isomerase from Xylella fastidiosa (strain M23).